A 422-amino-acid chain; its full sequence is UDP-N-acetylglucosamine 1-carboxyvinyltransferase (422 aa).

A phosphoenolpyruvate-binding site is contributed by 22 to 23 (KN). Arg94 contacts UDP-N-acetyl-alpha-D-glucosamine. Cys118 acts as the Proton donor in catalysis. Cys118 is modified (2-(S-cysteinyl)pyruvic acid O-phosphothioketal). UDP-N-acetyl-alpha-D-glucosamine is bound by residues 123 to 127 (RPVDL), Asp308, and Ile330.

Belongs to the EPSP synthase family. MurA subfamily.

Its subcellular location is the cytoplasm. The catalysed reaction is phosphoenolpyruvate + UDP-N-acetyl-alpha-D-glucosamine = UDP-N-acetyl-3-O-(1-carboxyvinyl)-alpha-D-glucosamine + phosphate. Its pathway is cell wall biogenesis; peptidoglycan biosynthesis. Cell wall formation. Adds enolpyruvyl to UDP-N-acetylglucosamine. The chain is UDP-N-acetylglucosamine 1-carboxyvinyltransferase from Dinoroseobacter shibae (strain DSM 16493 / NCIMB 14021 / DFL 12).